The following is a 251-amino-acid chain: MSFTVVIPARYSSSRLPGKPLADIGGKPMVQWVYEQAMQAGADDVIIATDDERVSAAVEQFGGKVCMTSPNHESGTERLAEVVEKMAIPADHIIVNVQGDEPLVPPVIIRQVADNLAASDAPMATLAVEIESEDEVFNPNAVKVVADERGYAMYFSRATIPWDRDNFAKQDKAIVNPLMRHIGIYAYRAGFINTYVNWAPSALEQIECLEQLRVLWYGEKIHVAVAKEAPAAGVDTPEDLEAVRAIVAKKA.

Belongs to the KdsB family.

The protein resides in the cytoplasm. The catalysed reaction is 3-deoxy-alpha-D-manno-oct-2-ulosonate + CTP = CMP-3-deoxy-beta-D-manno-octulosonate + diphosphate. It participates in nucleotide-sugar biosynthesis; CMP-3-deoxy-D-manno-octulosonate biosynthesis; CMP-3-deoxy-D-manno-octulosonate from 3-deoxy-D-manno-octulosonate and CTP: step 1/1. Its pathway is bacterial outer membrane biogenesis; lipopolysaccharide biosynthesis. Its function is as follows. Activates KDO (a required 8-carbon sugar) for incorporation into bacterial lipopolysaccharide in Gram-negative bacteria. This is 3-deoxy-manno-octulosonate cytidylyltransferase from Vibrio parahaemolyticus serotype O3:K6 (strain RIMD 2210633).